The sequence spans 234 residues: Triosephosphate isomerase (234 aa).

Residue 8–10 (NFK) coordinates substrate. His90 serves as the catalytic Electrophile. Glu159 acts as the Proton acceptor in catalysis. 2 residues coordinate substrate: Gly165 and Ser197.

The protein belongs to the triosephosphate isomerase family. Homodimer.

It localises to the cytoplasm. The enzyme catalyses D-glyceraldehyde 3-phosphate = dihydroxyacetone phosphate. Its pathway is carbohydrate biosynthesis; gluconeogenesis. The protein operates within carbohydrate degradation; glycolysis; D-glyceraldehyde 3-phosphate from glycerone phosphate: step 1/1. Functionally, involved in the gluconeogenesis. Catalyzes stereospecifically the conversion of dihydroxyacetone phosphate (DHAP) to D-glyceraldehyde-3-phosphate (G3P). This Helicobacter pylori (strain P12) protein is Triosephosphate isomerase.